The primary structure comprises 268 residues: MAVLDVSYGERAKVHASPVARRLFELMEKKQSNLCASIDVSSTDELLKLVEKLGPVICLVKTHIDTIDDFSYDGTILPLVELSKKYNFMIFEDRKFADIGNTVKNQYKNGIFKIAQWADITNAHGVTGEGIVKGLKEAALETTLEPRGLLMLAELSSKGSLAYGEYTNKTVEIAKSDKDFVIGFIAQHDMGGREEGFDWIIMTPGVGLDDKGDKLGQQYRTVDQVIDSGSDIIIVGRGLFGKGRDPVLQGERYRKAGWDAYLKRIGQL.

Residues D39, 61–63 (KTH), 93–102 (DRKFADIGNT), Y219, and R237 each bind substrate. Residue K95 is the Proton donor of the active site.

Belongs to the OMP decarboxylase family.

It catalyses the reaction orotidine 5'-phosphate + H(+) = UMP + CO2. It participates in pyrimidine metabolism; UMP biosynthesis via de novo pathway; UMP from orotate: step 2/2. The sequence is that of Orotidine 5'-phosphate decarboxylase (URA3) from Pachysolen tannophilus (Yeast).